The chain runs to 247 residues: Oil body-associated protein 2B (247 aa).

Residues methionine 1 to threonine 28 form a disordered region.

The protein belongs to the OBAP family.

The chain is Oil body-associated protein 2B from Arabidopsis thaliana (Mouse-ear cress).